The chain runs to 1138 residues: Eukaryotic translation initiation factor 3 subunit A (1138 aa).

One can recognise a PCI domain in the interval L319 to T502. Disordered stretches follow at residues N590–Q633 and E817–R1138. 4 stretches are compositionally biased toward basic and acidic residues: residues E817 to R903, D923 to D967, G1003 to Q1049, and D1058 to R1078. The span at P1082–N1100 shows a compositional bias: gly residues. Residues P1107–D1128 show a composition bias toward basic and acidic residues.

It belongs to the eIF-3 subunit A family. Component of the eukaryotic translation initiation factor 3 (eIF-3) complex. The eIF-3 complex interacts with pix.

It is found in the cytoplasm. In terms of biological role, RNA-binding component of the eukaryotic translation initiation factor 3 (eIF-3) complex, which is involved in protein synthesis of a specialized repertoire of mRNAs and, together with other initiation factors, stimulates binding of mRNA and methionyl-tRNAi to the 40S ribosome. The eIF-3 complex specifically targets and initiates translation of a subset of mRNAs involved in cell proliferation. This is Eukaryotic translation initiation factor 3 subunit A from Drosophila virilis (Fruit fly).